The primary structure comprises 37 residues: Hemextin A (37 aa).

Heterotetramer composed of two A and two B chains; non-covalently linked. Does not exist as a complex in the crude venom. In terms of processing, may contain several disulfide bonds. As to expression, expressed by the venom gland.

The protein resides in the secreted. Its function is as follows. Hemextin A (monomer): exhibits mild anticoagulant activity. It specifically inhibits the activation of FX (F10) by the TF-FVIIa complex (extrinsic tenase complex (ETC)) by non-competitively inhibiting the enzymatic activity of FVIIa. Hemextin AB complex: specifically inhibits the activation of FX (F10) by the TF-FVIIa complex (extrinsic tenase complex (ETC)) (IC(50)= 100 nM, Ki=25 nM) by non-competitively inhibiting the enzymatic activity of FVIIa. The chain is Hemextin A from Hemachatus haemachatus (Rinkhals).